The primary structure comprises 1053 residues: Putative ABC transporter C family member 15 (1053 aa).

The ABC transmembrane type-1 1 domain maps to 1 to 180 (MSVDVQRITD…LPDLLSALVQ (180 aa)). The next 4 helical transmembrane spans lie at 11-31 (FIWYVNSIWMLPIQIFSAIYI), 36-56 (LGLGALAALVTTLMVMACNYP), 125-145 (FILWGAPSLISVVTFVTCMLM), and 151-171 (AGAVLSALATFQMLQSPIFGL). Residues 214–437 (VEIENGAFSW…NIGFEVLTQC (224 aa)) enclose the ABC transporter 1 domain. An ATP-binding site is contributed by 249-256 (GAVGSGKS). Transmembrane regions (helical) follow at residues 481–503 (LLVPFIILAQSCFQMLQIASNYW), 523–543 (ILLVYALLAAGSSLCVLARTI), 595–615 (MAVKLGWCAFSIIQIVGTIFV), 714–734 (LSHFVFAFSLVLLVTLPEGVI), and 738–758 (IAGLGVTYGLSLNVLQATVIW). The region spanning 483-765 (VPFIILAQSC…VIWNICNAEN (283 aa)) is the ABC transmembrane type-1 2 domain. One can recognise an ABC transporter 2 domain in the interval 804–1036 (FRDLQVRYAE…EDSFFSKLIK (233 aa)). ATP is bound at residue 836-843 (GRTGSGKS).

This sequence belongs to the ABC transporter superfamily. ABCC family. Conjugate transporter (TC 3.A.1.208) subfamily.

It is found in the membrane. The enzyme catalyses ATP + H2O + xenobioticSide 1 = ADP + phosphate + xenobioticSide 2.. Pump for glutathione S-conjugates. The sequence is that of Putative ABC transporter C family member 15 (ABCC15) from Arabidopsis thaliana (Mouse-ear cress).